Consider the following 162-residue polypeptide: Nucleotide-binding protein CMM_2802 (162 aa).

The protein belongs to the YajQ family.

Nucleotide-binding protein. In Clavibacter michiganensis subsp. michiganensis (strain NCPPB 382), this protein is Nucleotide-binding protein CMM_2802.